Reading from the N-terminus, the 706-residue chain is D-(-)-3-hydroxybutyrate oligomer hydrolase (706 aa).

An N-terminal signal peptide occupies residues 1-32 (MTTTSKNCLTLTSIAAAVAAVLVLSACGGGSA). S311 serves as the catalytic Charge relay system.

Belongs to the D-(-)-3-hydroxybutyrate oligomer hydrolase family.

It localises to the secreted. The enzyme catalyses (3R)-hydroxybutanoate dimer + H2O = 2 (R)-3-hydroxybutanoate + H(+). Its pathway is lipid metabolism; butanoate metabolism. Its function is as follows. Participates in the degradation of poly-3-hydroxybutyrate (PHB). It works downstream of poly(3-hydroxybutyrate) depolymerase, hydrolyzing D(-)-3-hydroxybutyrate oligomers of various length (3HB-oligomers) into 3HB-monomers. This Polaromonas sp. (strain JS666 / ATCC BAA-500) protein is D-(-)-3-hydroxybutyrate oligomer hydrolase.